The following is a 526-amino-acid chain: Methane monooxygenase component A alpha chain (526 aa).

Residues glutamate 114, glutamate 144, and histidine 147 each coordinate Fe cation. Residue cysteine 151 is part of the active site. Fe cation is bound by residues glutamate 209, glutamate 243, and histidine 246.

Belongs to the TmoA/XamoA family. M.trichosporium has two forms of methane monooxygenase, a soluble and a membrane-bound type. The soluble type consists of four components (A to D): protein A, comprising three chains, in an alpha-2, beta-2, gamma-2 configuration, is a nonheme iron protein containing an unusual mu-hydroxo bridge structure at its active site and interacts with both oxygen and methane. Requires Fe cation as cofactor.

The enzyme catalyses methane + NADH + O2 + H(+) = methanol + NAD(+) + H2O. It catalyses the reaction methane + NADPH + O2 + H(+) = methanol + NADP(+) + H2O. Responsible for the initial oxygenation of methane to methanol in methanotrophs. It also catalyzes the monohydroxylation of a variety of unactivated alkenes, alicyclic, aromatic and heterocyclic compounds. This is Methane monooxygenase component A alpha chain (mmoX) from Methylosinus trichosporium.